The following is a 201-amino-acid chain: Large ribosomal subunit protein uL18 (201 aa).

The protein belongs to the universal ribosomal protein uL18 family. Part of the 50S ribosomal subunit. Contacts the 5S and 23S rRNAs.

This is one of the proteins that bind and probably mediate the attachment of the 5S RNA into the large ribosomal subunit, where it forms part of the central protuberance. The chain is Large ribosomal subunit protein uL18 from Thermococcus kodakarensis (strain ATCC BAA-918 / JCM 12380 / KOD1) (Pyrococcus kodakaraensis (strain KOD1)).